The chain runs to 930 residues: Translation initiation factor IF-2 (930 aa).

Disordered regions lie at residues 160–179 and 208–301; these read EPVE…FTDG and AKRA…AAAP. Positions 208 to 227 are enriched in basic and acidic residues; that stretch reads AKRAAEEAKRTQPRAEKPAD. 2 stretches are compositionally biased toward basic residues: residues 263-272 and 288-301; these read GHGHKKHHHG and KRGA…AAAP. Positions 431–600 constitute a tr-type G domain; the sequence is TRAPVVTVMG…SLQAEVLELT (170 aa). Positions 440-447 are G1; that stretch reads GHVDHGKT. A GTP-binding site is contributed by 440 to 447; sequence GHVDHGKT. The interval 465-469 is G2; it reads GITQH. The interval 486–489 is G3; that stretch reads DTPG. GTP is bound by residues 486 to 490 and 540 to 543; these read DTPGH and NKCD. Positions 540–543 are G4; that stretch reads NKCD. Residues 576-578 form a G5 region; the sequence is SAH.

This sequence belongs to the TRAFAC class translation factor GTPase superfamily. Classic translation factor GTPase family. IF-2 subfamily.

It localises to the cytoplasm. Its function is as follows. One of the essential components for the initiation of protein synthesis. Protects formylmethionyl-tRNA from spontaneous hydrolysis and promotes its binding to the 30S ribosomal subunits. Also involved in the hydrolysis of GTP during the formation of the 70S ribosomal complex. The polypeptide is Translation initiation factor IF-2 (Cellvibrio japonicus (strain Ueda107) (Pseudomonas fluorescens subsp. cellulosa)).